Here is a 90-residue protein sequence, read N- to C-terminus: DNA-binding protein HU-beta (90 aa).

This sequence belongs to the bacterial histone-like protein family. Heterodimer of an alpha and a beta chain.

Its function is as follows. Histone-like DNA-binding protein which is capable of wrapping DNA to stabilize it, and thus to prevent its denaturation under extreme environmental conditions. The protein is DNA-binding protein HU-beta (hupB) of Pseudomonas aeruginosa (strain ATCC 15692 / DSM 22644 / CIP 104116 / JCM 14847 / LMG 12228 / 1C / PRS 101 / PAO1).